Reading from the N-terminus, the 159-residue chain is Eukaryotic translation initiation factor 5A-1 (159 aa).

A compositionally biased stretch (basic and acidic residues) spans 1 to 12; sequence MSDEEHHFESKA. The disordered stretch occupies residues 1 to 23; that stretch reads MSDEEHHFESKADAGASKTYPQQ. Lysine 52 carries the post-translational modification Hypusine.

The protein belongs to the eIF-5A family. In terms of processing, lys-52 undergoes hypusination, a unique post-translational modification that consists in the addition of a butylamino group from spermidine to lysine side chain, leading to the formation of the unusual amino acid hypusine. eIF-5As are the only known proteins to undergo this modification, which is essential for their function.

Functionally, translation factor that promotes translation elongation and termination, particularly upon ribosome stalling at specific amino acid sequence contexts. Binds between the exit (E) and peptidyl (P) site of the ribosome and promotes rescue of stalled ribosome: specifically required for efficient translation of polyproline-containing peptides as well as other motifs that stall the ribosome. Acts as a ribosome quality control (RQC) cofactor by joining the RQC complex to facilitate peptidyl transfer during CAT tailing step. The polypeptide is Eukaryotic translation initiation factor 5A-1 (Solanum lycopersicum (Tomato)).